The sequence spans 212 residues: Ribosomal RNA small subunit methyltransferase G (212 aa).

Residues Gly-80, Leu-85, 131–132 (AE), and Arg-146 contribute to the S-adenosyl-L-methionine site.

This sequence belongs to the methyltransferase superfamily. RNA methyltransferase RsmG family.

It localises to the cytoplasm. It catalyses the reaction guanosine(527) in 16S rRNA + S-adenosyl-L-methionine = N(7)-methylguanosine(527) in 16S rRNA + S-adenosyl-L-homocysteine. Functionally, specifically methylates the N7 position of guanine in position 527 of 16S rRNA. In Xanthomonas oryzae pv. oryzae (strain MAFF 311018), this protein is Ribosomal RNA small subunit methyltransferase G.